Consider the following 434-residue polypeptide: MDYLDLGPYSSASGTVRLPGSKSISNRVLLLAALAEGETTITNLLDSDDTRVMLDALGKLGVKLARDGDTCVVTGTRGAFTAKTADLFLGNAGTAVRPLTAALAVNGGDYRVHGVPRMHERPIGDLVDGLRQIGAQIDYELSEGYPPLRIKPATISVDAPIRVRGDVSSQFLTALLMTLPLVKAKDGQAVVEVDGELISKPYVDITIRLMARFGVTVERDGWQRFVVPAGVRYRSPGRIMVEGDASSASYFLAAGALGGGPLRVEGVGRASIQGDVGFANALMQMGANVTMGDDWIDVRGIGHDHGKLEPIDMDFNLIPDAAMTIAVAALFANGTSTLRNIASWRVKETDRIAAMATELRKVGAIVEEGPDYLVVTPPEKLTPNAAIDTYDDHRMAMCFSLVSLGGVPVRINDPKCVGKTFPDYFDRFAALAKA.

3 residues coordinate 3-phosphoshikimate: Lys-22, Ser-23, and Arg-27. Lys-22 lines the phosphoenolpyruvate pocket. The phosphoenolpyruvate site is built by Gly-93 and Arg-121. Residues Ser-168, Ser-169, Gln-170, Ser-199, Asp-320, and Lys-347 each contribute to the 3-phosphoshikimate site. A phosphoenolpyruvate-binding site is contributed by Gln-170. The active-site Proton acceptor is Asp-320. Residues Arg-351, Arg-394, and Lys-419 each coordinate phosphoenolpyruvate.

This sequence belongs to the EPSP synthase family. As to quaternary structure, monomer.

The protein localises to the cytoplasm. It carries out the reaction 3-phosphoshikimate + phosphoenolpyruvate = 5-O-(1-carboxyvinyl)-3-phosphoshikimate + phosphate. It participates in metabolic intermediate biosynthesis; chorismate biosynthesis; chorismate from D-erythrose 4-phosphate and phosphoenolpyruvate: step 6/7. In terms of biological role, catalyzes the transfer of the enolpyruvyl moiety of phosphoenolpyruvate (PEP) to the 5-hydroxyl of shikimate-3-phosphate (S3P) to produce enolpyruvyl shikimate-3-phosphate and inorganic phosphate. The polypeptide is 3-phosphoshikimate 1-carboxyvinyltransferase (Burkholderia cenocepacia (strain HI2424)).